A 342-amino-acid polypeptide reads, in one-letter code: Ketol-acid reductoisomerase (NADP(+)) (342 aa).

Residues 2–181 enclose the KARI N-terminal Rossmann domain; the sequence is VKVYYNGDIQ…GGARAGVLET (180 aa). NADP(+) is bound by residues 25-28, Arg48, Ser52, and 82-85; these read YGSQ and DEQQ. Residue His107 is part of the active site. Gly133 contributes to the NADP(+) binding site. The 146-residue stretch at 182 to 327 folds into the KARI C-terminal knotted domain; sequence TFKEETETDL…RKLREMMPFV (146 aa). 4 residues coordinate Mg(2+): Asp190, Glu194, Glu226, and Glu230. Ser251 is a binding site for substrate.

Belongs to the ketol-acid reductoisomerase family. Mg(2+) is required as a cofactor.

The catalysed reaction is (2R)-2,3-dihydroxy-3-methylbutanoate + NADP(+) = (2S)-2-acetolactate + NADPH + H(+). The enzyme catalyses (2R,3R)-2,3-dihydroxy-3-methylpentanoate + NADP(+) = (S)-2-ethyl-2-hydroxy-3-oxobutanoate + NADPH + H(+). It participates in amino-acid biosynthesis; L-isoleucine biosynthesis; L-isoleucine from 2-oxobutanoate: step 2/4. Its pathway is amino-acid biosynthesis; L-valine biosynthesis; L-valine from pyruvate: step 2/4. In terms of biological role, involved in the biosynthesis of branched-chain amino acids (BCAA). Catalyzes an alkyl-migration followed by a ketol-acid reduction of (S)-2-acetolactate (S2AL) to yield (R)-2,3-dihydroxy-isovalerate. In the isomerase reaction, S2AL is rearranged via a Mg-dependent methyl migration to produce 3-hydroxy-3-methyl-2-ketobutyrate (HMKB). In the reductase reaction, this 2-ketoacid undergoes a metal-dependent reduction by NADPH to yield (R)-2,3-dihydroxy-isovalerate. This Bacillus pumilus (strain SAFR-032) protein is Ketol-acid reductoisomerase (NADP(+)).